A 407-amino-acid chain; its full sequence is Imidazolonepropionase (407 aa).

The Fe(3+) site is built by histidine 73 and histidine 75. Histidine 73 and histidine 75 together coordinate Zn(2+). Residues arginine 82, tyrosine 145, and histidine 178 each coordinate 4-imidazolone-5-propanoate. Residue tyrosine 145 participates in N-formimidoyl-L-glutamate binding. Histidine 243 contacts Fe(3+). Residue histidine 243 participates in Zn(2+) binding. Position 246 (glutamine 246) interacts with 4-imidazolone-5-propanoate. Aspartate 318 is a binding site for Fe(3+). Aspartate 318 contacts Zn(2+). N-formimidoyl-L-glutamate contacts are provided by asparagine 320 and glycine 322. Threonine 323 is a binding site for 4-imidazolone-5-propanoate.

The protein belongs to the metallo-dependent hydrolases superfamily. HutI family. Zn(2+) is required as a cofactor. The cofactor is Fe(3+).

The protein resides in the cytoplasm. It carries out the reaction 4-imidazolone-5-propanoate + H2O = N-formimidoyl-L-glutamate. It functions in the pathway amino-acid degradation; L-histidine degradation into L-glutamate; N-formimidoyl-L-glutamate from L-histidine: step 3/3. Catalyzes the hydrolytic cleavage of the carbon-nitrogen bond in imidazolone-5-propanoate to yield N-formimidoyl-L-glutamate. It is the third step in the universal histidine degradation pathway. This chain is Imidazolonepropionase, found in Serratia proteamaculans (strain 568).